A 668-amino-acid polypeptide reads, in one-letter code: MSTQAAGNQTSSGATDSEDSYDSWYIDEPQGGQELQPEGLVPSCQPNVPPSLYHTCLAVLSILVLFLLAMLVRRRQLWPRCGHGRPGLPSPVDFLTGDRPRTVPAAVFMVLFSSLCLLLPTEDPLPFLSLASPPGRDGEAETSRGPWKILALLYYPALYYPLAACATVRHGAAHLLGSLLSWAHLGVQVWQRAECPESPKIYKYYSLLASLPLLLGLGFLSLWYPVQLVRSFGHGAATGSKGLQSSYSEEYLRTLLCQKKLKSSSHTCKRGFASQAWMYFRHSVYIPQRGFRLPLKLVLSVTLTGTAIYQVALLLLVGVVPTIQKVRAGITTDVSYLLAGFGIVLSEDRQEVVELVKHHLWALEVCYISALVLSCLLTFLMLVHSLVTHRTNLRALHRGGALDIGPLTQSPRPSRQAIFCWMSFTAYQTAFTCLGLLVQQILFFLGTLTLAFLVFMPMLHGRNLLLLHYLKSSWPFWLTLALAVTLQNAAAHWAFLDTHHGRPGLTNRRALYAATFLLFPVNVLVGTMVAAWRVLLSALYNAVHLGRMDLSLLPLRAATLDPGYHTYCNFLRMEASQSHPAATAFCALLLRTQRPKPRATPQDGLRLGEEEEGIQLLQTKDLVAKGAGPRARQGRARWGLAYTLLHNPALQAFRKTALPGARPNGAQP.

Residues 1–15 (MSTQAAGNQTSSGAT) show a composition bias toward polar residues. The interval 1 to 28 (MSTQAAGNQTSSGATDSEDSYDSWYIDE) is disordered. Residues 1–51 (MSTQAAGNQTSSGATDSEDSYDSWYIDEPQGGQELQPEGLVPSCQPNVPPS) lie on the Extracellular side of the membrane. Asparagine 8 carries an N-linked (GlcNAc...) asparagine glycan. Residues 52–72 (LYHTCLAVLSILVLFLLAMLV) form a helical membrane-spanning segment. At 73–101 (RRRQLWPRCGHGRPGLPSPVDFLTGDRPR) the chain is on the cytoplasmic side. Residues 102–122 (TVPAAVFMVLFSSLCLLLPTE) traverse the membrane as a helical segment. Residues 123–145 (DPLPFLSLASPPGRDGEAETSRG) lie on the Extracellular side of the membrane. Residues 146 to 166 (PWKILALLYYPALYYPLAACA) traverse the membrane as a helical segment. At 167–169 (TVR) the chain is on the cytoplasmic side. A helical membrane pass occupies residues 170–190 (HGAAHLLGSLLSWAHLGVQVW). Over 191–206 (QRAECPESPKIYKYYS) the chain is Extracellular. The helical transmembrane segment at 207–227 (LLASLPLLLGLGFLSLWYPVQ) threads the bilayer. Residues 228-296 (LVRSFGHGAA…PQRGFRLPLK (69 aa)) lie on the Cytoplasmic side of the membrane. An interaction with RBP1 region spans residues 236 to 294 (AATGSKGLQSSYSEEYLRTLLCQKKLKSSSHTCKRGFASQAWMYFRHSVYIPQRGFRLP). Residues 297–317 (LVLSVTLTGTAIYQVALLLLV) form a helical membrane-spanning segment. Topologically, residues 318–368 (GVVPTIQKVRAGITTDVSYLLAGFGIVLSEDRQEVVELVKHHLWALEVCYI) are extracellular. The chain crosses the membrane as a helical span at residues 369 to 389 (SALVLSCLLTFLMLVHSLVTH). The Cytoplasmic portion of the chain corresponds to 390–423 (RTNLRALHRGGALDIGPLTQSPRPSRQAIFCWMS). The helical transmembrane segment at 424-444 (FTAYQTAFTCLGLLVQQILFF) threads the bilayer. Over 445–474 (LGTLTLAFLVFMPMLHGRNLLLLHYLKSSW) the chain is Extracellular. The chain crosses the membrane as a helical span at residues 475–495 (PFWLTLALAVTLQNAAAHWAF). Residues 496–510 (LDTHHGRPGLTNRRA) are Cytoplasmic-facing. An intramembrane region (helical) is located at residues 511–548 (LYAATFLLFPVNVLVGTMVAAWRVLLSALYNAVHLGRM). Residues 549-668 (DLSLLPLRAA…PGARPNGAQP (120 aa)) are Cytoplasmic-facing. Residue tyrosine 642 is modified to Phosphotyrosine.

Homodimer. Interacts with JAK2 and STAT5. Interacts (via extracellular domains) with RBP4. Interacts (via cytoplasmic domains) with RBP1. Phosphorylated on tyrosine residues in response to RBP4 binding. Phosphorylation requires the presence of LRAT, suggesting it may be triggered by the uptake of retinol that is then metabolized within the cell to retinoids that function as signaling molecules. As to expression, expressed in placenta, spleen, retinal blood vessels, and in astrocyte perivascular endfeet. Not detected in the endothelial cells of the choriocapillaris (at protein level).

It localises to the cell membrane. Functionally, functions as a retinol transporter. Accepts all-trans retinol from the extracellular retinol-binding protein RBP4, facilitates retinol transport across the cell membrane, and then transfers retinol to the cytoplasmic retinol-binding protein RBP1. Retinol uptake is enhanced by LRAT, an enzyme that converts retinol to all-trans retinyl esters, the storage forms of vitamin A. Contributes to the activation of a signaling cascade that depends on retinol transport and LRAT-dependent generation of retinol metabolites that then trigger activation of JAK2 and its target STAT5, and ultimately increase the expression of SOCS3 and inhibit cellular responses to insulin. Important for the homeostasis of vitamin A and its derivatives, such as retinoic acid. STRA6-mediated transport is particularly important in the eye, and under conditions of dietary vitamin A deficiency. Does not transport retinoic acid. In Bos taurus (Bovine), this protein is Receptor for retinol uptake STRA6 (STRA6).